Here is a 358-residue protein sequence, read N- to C-terminus: Protein ocs (358 aa).

This sequence belongs to the lysopine/nopaline/octopine/opine/vitopine dehydrogenases family.

It carries out the reaction D-octopine + NAD(+) + H2O = L-arginine + pyruvate + NADH + H(+). The enzyme catalyses D-lysopine + NADP(+) + H2O = L-lysine + pyruvate + NADPH + H(+). Its function is as follows. Reductive condensation of pyruvate and arginine, lysine, histidine, or octopine to form octopine, lysopine, histopine, or octopinic acid, respectively. NADPH is the preferred cofactor, but NADH can also be used. The chain is Protein ocs (ocs) from Agrobacterium vitis (Rhizobium vitis).